Here is a 375-residue protein sequence, read N- to C-terminus: Erythronate-4-phosphate dehydrogenase (375 aa).

Substrate contacts are provided by serine 45 and threonine 66. 2 residues coordinate NAD(+): aspartate 146 and threonine 175. Arginine 208 is an active-site residue. Aspartate 232 is a binding site for NAD(+). Glutamate 237 is a catalytic residue. Histidine 254 functions as the Proton donor in the catalytic mechanism. Glycine 257 contacts NAD(+). Tyrosine 258 serves as a coordination point for substrate.

The protein belongs to the D-isomer specific 2-hydroxyacid dehydrogenase family. PdxB subfamily. Homodimer.

It localises to the cytoplasm. It carries out the reaction 4-phospho-D-erythronate + NAD(+) = (R)-3-hydroxy-2-oxo-4-phosphooxybutanoate + NADH + H(+). It functions in the pathway cofactor biosynthesis; pyridoxine 5'-phosphate biosynthesis; pyridoxine 5'-phosphate from D-erythrose 4-phosphate: step 2/5. Catalyzes the oxidation of erythronate-4-phosphate to 3-hydroxy-2-oxo-4-phosphonooxybutanoate. In Yersinia enterocolitica serotype O:8 / biotype 1B (strain NCTC 13174 / 8081), this protein is Erythronate-4-phosphate dehydrogenase.